A 137-amino-acid chain; its full sequence is Nucleoside diphosphate kinase (137 aa).

Residues Lys-9, Phe-57, Arg-85, Thr-91, Arg-102, and Asn-112 each coordinate ATP. The active-site Pros-phosphohistidine intermediate is His-115.

It belongs to the NDK family. In terms of assembly, homotetramer. Mg(2+) is required as a cofactor.

The protein resides in the cytoplasm. It carries out the reaction a 2'-deoxyribonucleoside 5'-diphosphate + ATP = a 2'-deoxyribonucleoside 5'-triphosphate + ADP. The enzyme catalyses a ribonucleoside 5'-diphosphate + ATP = a ribonucleoside 5'-triphosphate + ADP. In terms of biological role, major role in the synthesis of nucleoside triphosphates other than ATP. The ATP gamma phosphate is transferred to the NDP beta phosphate via a ping-pong mechanism, using a phosphorylated active-site intermediate. The chain is Nucleoside diphosphate kinase from Leptospira borgpetersenii serovar Hardjo-bovis (strain L550).